Reading from the N-terminus, the 429-residue chain is Adenylosuccinate synthetase (429 aa).

GTP-binding positions include 12–18 (GDEGKGK) and 40–42 (GHT). Catalysis depends on Asp13, which acts as the Proton acceptor. Mg(2+)-binding residues include Asp13 and Gly40. IMP is bound by residues 13–16 (DEGK), 38–41 (NAGH), Thr129, Arg143, Gln223, Thr238, and Arg302. The active-site Proton donor is the His41. 298–304 (VVTGRKR) is a substrate binding site. Residues Arg304, 330 to 332 (KLD), and 412 to 414 (STS) contribute to the GTP site.

Belongs to the adenylosuccinate synthetase family. Homodimer. Requires Mg(2+) as cofactor.

It localises to the cytoplasm. It catalyses the reaction IMP + L-aspartate + GTP = N(6)-(1,2-dicarboxyethyl)-AMP + GDP + phosphate + 2 H(+). The protein operates within purine metabolism; AMP biosynthesis via de novo pathway; AMP from IMP: step 1/2. Functionally, plays an important role in the de novo pathway of purine nucleotide biosynthesis. Catalyzes the first committed step in the biosynthesis of AMP from IMP. This is Adenylosuccinate synthetase from Bartonella henselae (strain ATCC 49882 / DSM 28221 / CCUG 30454 / Houston 1) (Rochalimaea henselae).